Consider the following 407-residue polypeptide: Accessory Sec system protein translocase subunit SecY2 (407 aa).

10 helical membrane-spanning segments follow: residues 13–33 (FLWTLFFLFIYVLGTKLTLPF), 65–85 (LFSVGLSPWMSSMLIWQMFAV), 104–124 (MLLTLVIALIQSVALVLNLPL), 133–153 (TTIMVLDTLVLMAGTYFLIWL), 158–178 (AAMGLGGSIMIVMASMIAYIP), 190–210 (ISSLWLALMLVFSLVFLYLAV), 248–268 (IMYAMTLVSIPQYFLLIIHFL), 287–307 (PAWFILYLLTIFILALAFAFI), 345–365 (FALVGAFYLILISGLPMMVVL), and 370–390 (YLRLSMIPGIFMIFIGMVFSI).

The protein belongs to the SecY/SEC61-alpha family. SecY2 subfamily. Component of the accessory SecA2/SecY2 protein translocase complex required to export cell wall proteins. May form heterotrimers with SecE and SecG subunits.

The protein localises to the cell membrane. Functionally, part of the accessory SecA2/SecY2 system specifically required for export of possible cell wall proteins. The central subunit of a protein translocation channel. This Streptococcus sanguinis (strain SK36) protein is Accessory Sec system protein translocase subunit SecY2.